The following is a 387-amino-acid chain: Formate-dependent phosphoribosylglycinamide formyltransferase (387 aa).

Residues 12-13 (EL) and Glu-72 contribute to the N(1)-(5-phospho-beta-D-ribosyl)glycinamide site. Residues Arg-104, Lys-145, 150-155 (SSGKGQ), 185-188 (EEFI), and Glu-193 contribute to the ATP site. Positions 109–300 (DLAAKDLKLL…EFELHLRAIL (192 aa)) constitute an ATP-grasp domain. 2 residues coordinate Mg(2+): Glu-258 and Glu-270. N(1)-(5-phospho-beta-D-ribosyl)glycinamide is bound by residues Asp-277, Lys-348, and 355–356 (RR).

It belongs to the PurK/PurT family. In terms of assembly, homodimer.

The catalysed reaction is N(1)-(5-phospho-beta-D-ribosyl)glycinamide + formate + ATP = N(2)-formyl-N(1)-(5-phospho-beta-D-ribosyl)glycinamide + ADP + phosphate + H(+). Its pathway is purine metabolism; IMP biosynthesis via de novo pathway; N(2)-formyl-N(1)-(5-phospho-D-ribosyl)glycinamide from N(1)-(5-phospho-D-ribosyl)glycinamide (formate route): step 1/1. In terms of biological role, involved in the de novo purine biosynthesis. Catalyzes the transfer of formate to 5-phospho-ribosyl-glycinamide (GAR), producing 5-phospho-ribosyl-N-formylglycinamide (FGAR). Formate is provided by PurU via hydrolysis of 10-formyl-tetrahydrofolate. This chain is Formate-dependent phosphoribosylglycinamide formyltransferase, found in Leptospira interrogans serogroup Icterohaemorrhagiae serovar copenhageni (strain Fiocruz L1-130).